Consider the following 253-residue polypeptide: 5-oxoprolinase subunit A (253 aa).

This sequence belongs to the LamB/PxpA family. As to quaternary structure, forms a complex composed of PxpA, PxpB and PxpC.

It carries out the reaction 5-oxo-L-proline + ATP + 2 H2O = L-glutamate + ADP + phosphate + H(+). In terms of biological role, catalyzes the cleavage of 5-oxoproline to form L-glutamate coupled to the hydrolysis of ATP to ADP and inorganic phosphate. The protein is 5-oxoprolinase subunit A of Bacillus anthracis (strain A0248).